The following is a 252-amino-acid chain: 14-3-3 protein 7 (252 aa).

It belongs to the 14-3-3 family. As to quaternary structure, homodimer.

The polypeptide is 14-3-3 protein 7 (TFT7) (Solanum lycopersicum (Tomato)).